A 164-amino-acid chain; its full sequence is Magnesium-dependent phosphatase 1 (164 aa).

The Nucleophile role is filled by Asp-11. Asp-11 provides a ligand contact to Mg(2+). Phosphate-binding residues include Leu-12 and Asp-13. Asp-13 is a binding site for Mg(2+). The active-site Proton donor is the Asp-13. Trp-20 contacts substrate. The phosphate site is built by Ser-69, Arg-70, and Lys-100. Arg-70 is a binding site for substrate. A Mg(2+)-binding site is contributed by Asp-123.

Belongs to the HAD-like hydrolase superfamily. The cofactor is Mg(2+).

The catalysed reaction is O-phospho-L-tyrosyl-[protein] + H2O = L-tyrosyl-[protein] + phosphate. Its activity is regulated as follows. Inhibited by vanadate and zinc, and slightly by calcium. Magnesium-dependent phosphatase which may act as a tyrosine phosphatase. The sequence is that of Magnesium-dependent phosphatase 1 (Mdp1) from Mus musculus (Mouse).